We begin with the raw amino-acid sequence, 475 residues long: Ribulose bisphosphate carboxylase large chain (475 aa).

A propeptide spanning residues 1–2 (MS) is cleaved from the precursor. P3 carries the N-acetylproline modification. N6,N6,N6-trimethyllysine is present on K14. Substrate-binding residues include N123 and T173. The Proton acceptor role is filled by K175. A substrate-binding site is contributed by K177. Positions 201, 203, and 204 each coordinate Mg(2+). K201 is modified (N6-carboxylysine). The Proton acceptor role is filled by H294. Residues R295, H327, and S379 each contribute to the substrate site.

The protein belongs to the RuBisCO large chain family. Type I subfamily. Heterohexadecamer of 8 large chains and 8 small chains; disulfide-linked. The disulfide link is formed within the large subunit homodimers. It depends on Mg(2+) as a cofactor. In terms of processing, the disulfide bond which can form in the large chain dimeric partners within the hexadecamer appears to be associated with oxidative stress and protein turnover.

It localises to the plastid. It is found in the chloroplast. It catalyses the reaction 2 (2R)-3-phosphoglycerate + 2 H(+) = D-ribulose 1,5-bisphosphate + CO2 + H2O. The catalysed reaction is D-ribulose 1,5-bisphosphate + O2 = 2-phosphoglycolate + (2R)-3-phosphoglycerate + 2 H(+). In terms of biological role, ruBisCO catalyzes two reactions: the carboxylation of D-ribulose 1,5-bisphosphate, the primary event in carbon dioxide fixation, as well as the oxidative fragmentation of the pentose substrate in the photorespiration process. Both reactions occur simultaneously and in competition at the same active site. The chain is Ribulose bisphosphate carboxylase large chain from Mesostigma viride (Green alga).